The chain runs to 533 residues: (E)-beta-farnesene synthase (533 aa).

Mg(2+) contacts are provided by D286, D290, N430, S434, and E438. Residues 286-290 (DDMMD) carry the DDXXD motif motif.

This sequence belongs to the terpene synthase family. Mg(2+) serves as cofactor. The cofactor is Co(2+). Mn(2+) is required as a cofactor.

It localises to the cytoplasm. The enzyme catalyses (2E,6E)-farnesyl diphosphate = (E)-beta-farnesene + diphosphate. It participates in secondary metabolite biosynthesis; terpenoid biosynthesis. Sesquiterpene cyclase catalyzing the production of sixfold more beta-farnesene than alpha-bergamotene from farnesyl diphosphate. Involved in indirect defense by producing volatile signals attracting natural enemies of herbivores. The sequence is that of (E)-beta-farnesene synthase from Zea perennis (Perennial teosinte).